The primary structure comprises 372 residues: G patch domain and ankyrin repeat-containing protein 1 (372 aa).

The interval 74–110 (DSSSSKPQRAEPMRERKKKRRRVTREPAAAGVPRQGR) is disordered. ANK repeat units follow at residues 124-155 (LAAQ…ARDA) and 156-186 (FWWT…WVGV). 2 disordered regions span residues 211 to 233 (RESH…SSQF) and 251 to 271 (AHLL…GVPT). Residues 220-233 (PENQNRSTPSSSQF) show a composition bias toward polar residues. A G-patch domain is found at 271–317 (TSSPGFRLLLRGGWEPGMGLGPRGEGRANPIPTILKRDQEGLGYRSP). Residue Lys306 forms a Glycyl lysine isopeptide (Lys-Gly) (interchain with G-Cter in SUMO2) linkage. Basic and acidic residues-rich tracts occupy residues 330–340 (TRAVSGRERVP) and 348–357 (RENRRQEEKG). The segment at 330–357 (TRAVSGRERVPRVATLSQRENRRQEEKG) is disordered.

The sequence is that of G patch domain and ankyrin repeat-containing protein 1 (Gpank1) from Mus musculus (Mouse).